We begin with the raw amino-acid sequence, 313 residues long: 4-hydroxy-3-methylbut-2-enyl diphosphate reductase (313 aa).

A [4Fe-4S] cluster-binding site is contributed by cysteine 14. Histidine 43 and histidine 76 together coordinate (2E)-4-hydroxy-3-methylbut-2-enyl diphosphate. Histidine 43 and histidine 76 together coordinate dimethylallyl diphosphate. Isopentenyl diphosphate-binding residues include histidine 43 and histidine 76. [4Fe-4S] cluster is bound at residue cysteine 98. A (2E)-4-hydroxy-3-methylbut-2-enyl diphosphate-binding site is contributed by histidine 126. Histidine 126 is a dimethylallyl diphosphate binding site. Histidine 126 serves as a coordination point for isopentenyl diphosphate. The active-site Proton donor is glutamate 128. A (2E)-4-hydroxy-3-methylbut-2-enyl diphosphate-binding site is contributed by threonine 166. [4Fe-4S] cluster is bound at residue cysteine 196. Residues serine 224, serine 225, asparagine 226, and serine 269 each contribute to the (2E)-4-hydroxy-3-methylbut-2-enyl diphosphate site. Dimethylallyl diphosphate-binding residues include serine 224, serine 225, asparagine 226, and serine 269. Residues serine 224, serine 225, asparagine 226, and serine 269 each coordinate isopentenyl diphosphate.

Belongs to the IspH family. The cofactor is [4Fe-4S] cluster.

The enzyme catalyses isopentenyl diphosphate + 2 oxidized [2Fe-2S]-[ferredoxin] + H2O = (2E)-4-hydroxy-3-methylbut-2-enyl diphosphate + 2 reduced [2Fe-2S]-[ferredoxin] + 2 H(+). The catalysed reaction is dimethylallyl diphosphate + 2 oxidized [2Fe-2S]-[ferredoxin] + H2O = (2E)-4-hydroxy-3-methylbut-2-enyl diphosphate + 2 reduced [2Fe-2S]-[ferredoxin] + 2 H(+). It participates in isoprenoid biosynthesis; dimethylallyl diphosphate biosynthesis; dimethylallyl diphosphate from (2E)-4-hydroxy-3-methylbutenyl diphosphate: step 1/1. It functions in the pathway isoprenoid biosynthesis; isopentenyl diphosphate biosynthesis via DXP pathway; isopentenyl diphosphate from 1-deoxy-D-xylulose 5-phosphate: step 6/6. In terms of biological role, catalyzes the conversion of 1-hydroxy-2-methyl-2-(E)-butenyl 4-diphosphate (HMBPP) into a mixture of isopentenyl diphosphate (IPP) and dimethylallyl diphosphate (DMAPP). Acts in the terminal step of the DOXP/MEP pathway for isoprenoid precursor biosynthesis. In Tropheryma whipplei (strain TW08/27) (Whipple's bacillus), this protein is 4-hydroxy-3-methylbut-2-enyl diphosphate reductase.